The following is a 999-amino-acid chain: Sarcoplasmic/endoplasmic reticulum calcium ATPase 3 (999 aa).

Residue methionine 1 is modified to N-acetylmethionine. The Cytoplasmic segment spans residues 1–48 (MEEAHLLSAADVLRRFSVTAEGGLSLEQVTDARERYGPNELPTEEGKS). Serine 17 is modified (phosphoserine). Threonine 19 is subject to Phosphothreonine. Serine 25 carries the phosphoserine modification. Residues 49 to 69 (LWELVVEQFEDLLVRILLLAA) traverse the membrane as a helical segment. Over 70–89 (LVSFVLAWFEEGEETTTAFV) the chain is Lumenal. Residues 90-110 (EPLVIMLILVANAIVGVWQER) traverse the membrane as a helical segment. Residues 111–253 (NAESAIEALK…PERTPLQRKL (143 aa)) are Cytoplasmic-facing. A helical membrane pass occupies residues 254-273 (DEFGRQLSHAISVICVAVWV). Residues 274 to 295 (INIGHFADPAHGGSWLRGAVYY) are Lumenal-facing. A helical membrane pass occupies residues 296–313 (FKIAVALAVAAIPEGLPA). Ca(2+)-binding residues include valine 304, alanine 305, isoleucine 307, and glutamate 309. The Cytoplasmic segment spans residues 314–757 (VITTCLALGT…EEGRAIYNNM (444 aa)). The 4-aspartylphosphate intermediate role is filled by aspartate 351. Positions 351 and 353 each coordinate Mg(2+). Threonine 353 is a binding site for ATP. An interaction with phospholamban 1 region spans residues 370–400 (AEAEAGTCRLHEFTISGTTYTPEGEVRQGEQ). Threonine 415 carries the phosphothreonine modification. Residues glutamate 442, arginine 489, lysine 515, arginine 560, threonine 625, glycine 626, and aspartate 627 each contribute to the ATP site. The residue at position 662 (serine 662) is a Phosphoserine. Residues arginine 678 and lysine 684 each contribute to the ATP site. A Mg(2+)-binding site is contributed by aspartate 703. Residue asparagine 706 coordinates ATP. The chain crosses the membrane as a helical span at residues 758-777 (KQFIRYLISSNVGEVVCIFL). Ca(2+) contacts are provided by asparagine 768 and glutamate 771. Over 778-787 (TAILGLPEAL) the chain is Lumenal. A helical transmembrane segment spans residues 788 to 808 (IPVQLLWVNLVTDGLPATALG). The segment at 788-808 (IPVQLLWVNLVTDGLPATALG) is interaction with phospholamban 2. The Ca(2+) site is built by asparagine 796, threonine 799, and aspartate 800. Residues 809 to 828 (FNPPDLDIMEKPPRNPREAL) lie on the Cytoplasmic side of the membrane. A helical membrane pass occupies residues 829–851 (ISGWLFFRYLAIGVYVGLATVAA). The Lumenal segment spans residues 852 to 897 (ATWWFLYDTEGPQVTFYQLRNFLKCSEDNPLFAGIDCKVFESRFPT). Residues 898-917 (TMALSVLVTIEMCNALNSVS) form a helical membrane-spanning segment. Glutamate 908 provides a ligand contact to Ca(2+). At 918-930 (ENQSLLRMPPWLN) the chain is on the cytoplasmic side. A helical membrane pass occupies residues 931-949 (PWLLGAVVMSMALHFLILL). The Lumenal portion of the chain corresponds to 950-964 (VPPLPLIFQVTPLSG). Residues 965–985 (RQWGVVLQMSLPVILLDEALK) form a helical membrane-spanning segment. The Cytoplasmic portion of the chain corresponds to 986–999 (YLSRNHMDEKKDLK).

This sequence belongs to the cation transport ATPase (P-type) (TC 3.A.3) family. Type IIA subfamily. Interacts with sarcolipin (SLN). Interacts with phospholamban (PLN). Interacts with myoregulin (MRLN). Interacts with DWORF. Interacts with VMP1. Interacts with TUNAR; the interaction occurs at low levels in low glucose conditions and is increased by high glucose levels. It depends on Mg(2+) as a cofactor.

The protein resides in the endoplasmic reticulum membrane. It is found in the sarcoplasmic reticulum membrane. The enzyme catalyses Ca(2+)(in) + ATP + H2O = Ca(2+)(out) + ADP + phosphate + H(+). Inhibited by sarcolipin (SLN), phospholamban (PLN) and myoregulin (MRLN). Enhanced by DWORF; DWORF increases activity by displacing sarcolipin (SLN), phospholamban (PLN) and myoregulin (MRLN). This magnesium-dependent enzyme catalyzes the hydrolysis of ATP coupled with the transport of calcium. Transports calcium ions from the cytosol into the sarcoplasmic/endoplasmic reticulum lumen. Contributes to calcium sequestration involved in muscular excitation/contraction. The protein is Sarcoplasmic/endoplasmic reticulum calcium ATPase 3 (Atp2a3) of Mus musculus (Mouse).